Reading from the N-terminus, the 279-residue chain is Biotin synthase (279 aa).

Positions 1 to 228 (MKDIFLCSIC…SARLMIAGGR (228 aa)) constitute a Radical SAM core domain. 3 residues coordinate [4Fe-4S] cluster: Cys-17, Cys-21, and Cys-24. 4 residues coordinate [2Fe-2S] cluster: Cys-61, Cys-96, Cys-154, and Arg-221.

This sequence belongs to the radical SAM superfamily. Biotin synthase family. As to quaternary structure, homodimer. Requires [4Fe-4S] cluster as cofactor. The cofactor is [2Fe-2S] cluster.

The enzyme catalyses (4R,5S)-dethiobiotin + (sulfur carrier)-SH + 2 reduced [2Fe-2S]-[ferredoxin] + 2 S-adenosyl-L-methionine = (sulfur carrier)-H + biotin + 2 5'-deoxyadenosine + 2 L-methionine + 2 oxidized [2Fe-2S]-[ferredoxin]. It participates in cofactor biosynthesis; biotin biosynthesis; biotin from 7,8-diaminononanoate: step 2/2. In terms of biological role, catalyzes the conversion of dethiobiotin (DTB) to biotin by the insertion of a sulfur atom into dethiobiotin via a radical-based mechanism. This Wolinella succinogenes (strain ATCC 29543 / DSM 1740 / CCUG 13145 / JCM 31913 / LMG 7466 / NCTC 11488 / FDC 602W) (Vibrio succinogenes) protein is Biotin synthase.